Here is a 307-residue protein sequence, read N- to C-terminus: Low-salt glycan biosynthesis hexosyltransferase Agl10 (307 aa).

It belongs to the glycosyltransferase 2 family.

The protein operates within protein modification; protein glycosylation. Its pathway is cell surface structure biogenesis; S-layer biogenesis. In terms of biological role, hexosyltransferase involved in N-glycan biosynthetic pathway that takes place under low-salt conditions (1.75 M instead of 3.4 M). Participates in the formation of the tetrasaccharide present at 'Asn-532' of S-layer glycoprotein Csg, consisting of a sulfated hexose, 2 hexoses and rhamnose. Involved in the addition of final rhamnose (sugar 4) of the tetrasaccharide on the dolichol phosphate carrier. This chain is Low-salt glycan biosynthesis hexosyltransferase Agl10 (agl10), found in Haloferax volcanii (strain ATCC 29605 / DSM 3757 / JCM 8879 / NBRC 14742 / NCIMB 2012 / VKM B-1768 / DS2) (Halobacterium volcanii).